The following is a 145-amino-acid chain: Alpha-amylase/trypsin inhibitor CMa (145 aa).

A signal peptide spans 1 to 25 (MASKSSITPLLLAAVLASVFAAATA).

It belongs to the protease inhibitor I6 (cereal trypsin/alpha-amylase inhibitor) family. Heterotetramer of one CMa, one CMb and two CMd chains. Post-translationally, five disulfide bonds, which are essential for the inhibitor activity, are probably present. As to expression, endosperm.

The protein resides in the secreted. Its function is as follows. Alpha-amylase/trypsin inhibitor. It could be involved in insect defense mechanisms. The protein is Alpha-amylase/trypsin inhibitor CMa (IAT1) of Hordeum vulgare (Barley).